The chain runs to 837 residues: Katanin p80 WD40 repeat-containing subunit B1 homolog KTN80.4 (837 aa).

WD repeat units lie at residues 14-54, 57-96, 99-138, 141-182, 184-222, 225-265, and 267-304; these read AHSA…AILS, GHSS…IVRT, GHRS…CIHT, GHTR…TEFK, HEGQ…LIGS, PETA…DGVD, and GWSR…TEPC. A DWD box motif is present at residues 115 to 131; the sequence is FFASGSLDTNLKIWDIR. 3 disordered regions span residues 307 to 328, 358 to 462, and 501 to 614; these read GDTA…DPVV, GRLS…ANPV, and LQAA…LVIN. Polar residues-rich tracts occupy residues 376–387 and 412–450; these read IGRSSTSQNSES and TFSS…TSRR. The span at 509-520 shows a compositional bias: low complexity; it reads SPSSRNNPDLPD. 2 stretches are compositionally biased toward basic and acidic residues: residues 553 to 563 and 580 to 595; these read ATERSINDFRY and RNHD…RSNR.

The protein belongs to the WD repeat KATNB1 family. Component of KTN80-KTN1 complexes composed of a hexamer of KTN1-KTN80 heterodimers that sense microtubule (MT) geometry to confer precise MT severing. Interacts directly with AAA1/KTN1, and weakly with KTN80.1 and KTN80.3. Expressed in siliques, flowers, leaves, stems and roots.

The protein resides in the cytoplasm. Its subcellular location is the cytoskeleton. Functionally, may participate in a complex which severs microtubules in an ATP-dependent manner. This activity may promote rapid reorganization of cellular microtubule arrays. Confers precision to microtubule (MT) severing by specific targeting of KTN1 to MT cleavage sites such as crossover or branching nucleation sites. Together with other KTN80s, regulates cell elongation by modulating MT organization. The polypeptide is Katanin p80 WD40 repeat-containing subunit B1 homolog KTN80.4 (Arabidopsis thaliana (Mouse-ear cress)).